A 229-amino-acid polypeptide reads, in one-letter code: Ribosomal RNA small subunit methyltransferase G (229 aa).

S-adenosyl-L-methionine-binding positions include Gly71, 122–123 (AE), and Arg139.

This sequence belongs to the methyltransferase superfamily. RNA methyltransferase RsmG family.

The protein resides in the cytoplasm. Specifically methylates the N7 position of a guanine in 16S rRNA. The chain is Ribosomal RNA small subunit methyltransferase G from Thermotoga neapolitana (strain ATCC 49049 / DSM 4359 / NBRC 107923 / NS-E).